A 261-amino-acid polypeptide reads, in one-letter code: MKHGLNGLLLAFQFLTTVPITRQIPWTARSARWSIVCYPLTGLVLGGLLVSLYLLLSPFLSPLVLAALLVTLSIFYSGGLHLDGWMDVSDAFLSRRDRETKLIILKDSRVGAFAVMTTILLIGWKVLLLMELIALAPREFTWLLLLVPVCLRWMIIVQLIYGKAASDQGMAASLLPYVTTHVKNASRVWFLFIAGACFLLLQNVILTLCFLLMIWLFPLFWLRVCKREIGGMSGDTIGASIEGGELFLWGIMWTFFLSVTA.

Transmembrane regions (helical) follow at residues 4–26 (GLNG…QIPW), 40–60 (LTGL…SPFL), 62–82 (PLVL…GLHL), 110–130 (VGAF…LLLM), 140–160 (FTWL…VQLI), 197–217 (CFLL…IWLF), and 237–257 (IGAS…TFFL).

It belongs to the CobS family. Requires Mg(2+) as cofactor.

The protein resides in the cell membrane. The enzyme catalyses alpha-ribazole + adenosylcob(III)inamide-GDP = adenosylcob(III)alamin + GMP + H(+). The catalysed reaction is alpha-ribazole 5'-phosphate + adenosylcob(III)inamide-GDP = adenosylcob(III)alamin 5'-phosphate + GMP + H(+). Its pathway is cofactor biosynthesis; adenosylcobalamin biosynthesis; adenosylcobalamin from cob(II)yrinate a,c-diamide: step 7/7. In terms of biological role, joins adenosylcobinamide-GDP and alpha-ribazole to generate adenosylcobalamin (Ado-cobalamin). Also synthesizes adenosylcobalamin 5'-phosphate from adenosylcobinamide-GDP and alpha-ribazole 5'-phosphate. The protein is Adenosylcobinamide-GDP ribazoletransferase of Halalkalibacterium halodurans (strain ATCC BAA-125 / DSM 18197 / FERM 7344 / JCM 9153 / C-125) (Bacillus halodurans).